Consider the following 1081-residue polypeptide: Isoleucine--tRNA ligase (1081 aa).

The short motif at 53–63 is the 'HIGH' region element; sequence PFATGLPHYGN. The short motif at 607–611 is the 'KMSKS' region element; that stretch reads KMSKS. Position 610 (Lys610) interacts with ATP.

Belongs to the class-I aminoacyl-tRNA synthetase family.

The enzyme catalyses tRNA(Ile) + L-isoleucine + ATP = L-isoleucyl-tRNA(Ile) + AMP + diphosphate. In Tetrahymena thermophila, this protein is Isoleucine--tRNA ligase (ILSA).